Here is a 273-residue protein sequence, read N- to C-terminus: Mitochondrial inner membrane protease ATP23 (273 aa).

A compositionally biased stretch (polar residues) spans 1–11; it reads MASPQDNTPSG. The disordered stretch occupies residues 1–33; the sequence is MASPQDNTPSGATPKPQTHEETPDQVKLRINGG. Residues 17 to 27 are compositionally biased toward basic and acidic residues; the sequence is QTHEETPDQVK. His170 serves as a coordination point for a divalent metal cation. Glu171 is a catalytic residue. His174 is a binding site for a divalent metal cation.

Belongs to the peptidase M76 family.

The protein localises to the mitochondrion inner membrane. Functionally, has a dual role in the assembly of mitochondrial ATPase. Acts as a protease that removes N-terminal residues of mitochondrial ATPase CF(0) subunit 6 at the intermembrane space side. Also involved in the correct assembly of the membrane-embedded ATPase CF(0) particle, probably mediating association of subunit 6 with the subunit 9 ring. The chain is Mitochondrial inner membrane protease ATP23 (ATP23) from Pyricularia oryzae (strain 70-15 / ATCC MYA-4617 / FGSC 8958) (Rice blast fungus).